Consider the following 417-residue polypeptide: D-inositol 3-phosphate glycosyltransferase (417 aa).

Residue histidine 15 coordinates 1D-myo-inositol 3-phosphate. Residues glutamine 21–proline 22 and glycine 29 each bind UDP-N-acetyl-alpha-D-glucosamine. 1D-myo-inositol 3-phosphate contacts are provided by residues aspartate 26–asparagine 31, lysine 84, tyrosine 117, threonine 141, and arginine 161. UDP-N-acetyl-alpha-D-glucosamine is bound by residues arginine 241, lysine 246, and valine 299. Residues tyrosine 308, arginine 309, and alanine 311 each contribute to the Mg(2+) site. Glutamate 321 and glutamate 329 together coordinate UDP-N-acetyl-alpha-D-glucosamine. Mg(2+) is bound at residue threonine 335.

It belongs to the glycosyltransferase group 1 family. MshA subfamily. Homodimer.

The enzyme catalyses 1D-myo-inositol 3-phosphate + UDP-N-acetyl-alpha-D-glucosamine = 1D-myo-inositol 2-acetamido-2-deoxy-alpha-D-glucopyranoside 3-phosphate + UDP + H(+). Functionally, catalyzes the transfer of a N-acetyl-glucosamine moiety to 1D-myo-inositol 3-phosphate to produce 1D-myo-inositol 2-acetamido-2-deoxy-glucopyranoside 3-phosphate in the mycothiol biosynthesis pathway. This is D-inositol 3-phosphate glycosyltransferase from Xylanimonas cellulosilytica (strain DSM 15894 / JCM 12276 / CECT 5975 / KCTC 9989 / LMG 20990 / NBRC 107835 / XIL07).